Reading from the N-terminus, the 338-residue chain is Ketol-acid reductoisomerase (NADP(+)) (338 aa).

A KARI N-terminal Rossmann domain is found at M1–T181. NADP(+) is bound by residues Y24 to Q27, R47, S50, S52, and D82 to Q85. The active site involves H107. G133 provides a ligand contact to NADP(+). In terms of domain architecture, KARI C-terminal knotted spans S182–I327. D190, E194, E226, and E230 together coordinate Mg(2+). S251 provides a ligand contact to substrate.

The protein belongs to the ketol-acid reductoisomerase family. Requires Mg(2+) as cofactor.

It carries out the reaction (2R)-2,3-dihydroxy-3-methylbutanoate + NADP(+) = (2S)-2-acetolactate + NADPH + H(+). It catalyses the reaction (2R,3R)-2,3-dihydroxy-3-methylpentanoate + NADP(+) = (S)-2-ethyl-2-hydroxy-3-oxobutanoate + NADPH + H(+). Its pathway is amino-acid biosynthesis; L-isoleucine biosynthesis; L-isoleucine from 2-oxobutanoate: step 2/4. It participates in amino-acid biosynthesis; L-valine biosynthesis; L-valine from pyruvate: step 2/4. Involved in the biosynthesis of branched-chain amino acids (BCAA). Catalyzes an alkyl-migration followed by a ketol-acid reduction of (S)-2-acetolactate (S2AL) to yield (R)-2,3-dihydroxy-isovalerate. In the isomerase reaction, S2AL is rearranged via a Mg-dependent methyl migration to produce 3-hydroxy-3-methyl-2-ketobutyrate (HMKB). In the reductase reaction, this 2-ketoacid undergoes a metal-dependent reduction by NADPH to yield (R)-2,3-dihydroxy-isovalerate. The protein is Ketol-acid reductoisomerase (NADP(+)) of Alkalilimnicola ehrlichii (strain ATCC BAA-1101 / DSM 17681 / MLHE-1).